Consider the following 237-residue polypeptide: ADTIVAVELDTYPNTDIGDPSYPHIGIDIKSVRSKKTAKWNMQNGKVGTAHIIYNSVGKRLSAVVSYPNGDSATVSYDVDLDNVLPEWVRVGLSASTGLYKETNTILSWSFTSKLKSNSTHETNALHFMFNQFSKDQKDLILQGDATTGTEGNLRLTRVSSNGSPQGSSVGRALFYAPVHIWESSAVVASFEATFTFLIKSPDSHPADGIAFFISNIDSSIPSGSTGRLLGLFPDAN.

Mn(2+) is bound by residues glutamate 8 and aspartate 10. Residues aspartate 10, tyrosine 12, asparagine 14, and aspartate 19 each coordinate Ca(2+). Residue tyrosine 12 coordinates a carbohydrate. Positions 19, 24, and 34 each coordinate Mn(2+). Position 99 to 100 (99 to 100) interacts with a carbohydrate; sequence LY. A Ca(2+)-binding site is contributed by aspartate 208. Arginine 228 contributes to the a carbohydrate binding site.

It belongs to the leguminous lectin family. Homotetramer.

Functionally, glucose/D-mannose specific lectin. Has anti-inflammatory activity in rats. Induces histamine release in mast cells from hamster and rat. Induces lymphocyte proliferation and IFNG production. Shows toxicity against the aquatic snail B.glabrata at concentrations higher than 20 ug/ml. This is Concanavalin-Br from Canavalia brasiliensis (Brazilian jack bean).